Consider the following 255-residue polypeptide: Small ribosomal subunit protein eS1 (255 aa).

Residues 1–18 (MAVGKNKRLSKGKKGLKK) are compositionally biased toward basic residues. The segment at 1–28 (MAVGKNKRLSKGKKGLKKRTQDPFSRKD) is disordered. At Ala2 the chain carries N-acetylalanine; partial. Over residues 19-28 (RTQDPFSRKD) the composition is skewed to basic and acidic residues.

It belongs to the eukaryotic ribosomal protein eS1 family. As to quaternary structure, component of the small ribosomal subunit. Mature ribosomes consist of a small (40S) and a large (60S) subunit. The 40S subunit contains about 33 different proteins and 1 molecule of RNA (18S). The 60S subunit contains about 49 different proteins and 3 molecules of RNA (25S, 5.8S and 5S).

The protein resides in the cytoplasm. This Ajellomyces capsulatus (strain H143) (Darling's disease fungus) protein is Small ribosomal subunit protein eS1.